The sequence spans 411 residues: Pyruvate dehydrogenase E1 component subunit alpha, mitochondrial (411 aa).

The N-terminal 29 residues, 1 to 29 (MFSRAVRLSRAALPIRVASQRVPIAARRS), are a transit peptide targeting the mitochondrion. Pyruvate contacts are provided by His-111, Tyr-137, Arg-138, Gly-184, Val-186, Asp-215, Gly-216, Ala-217, Asn-244, and Tyr-246. Tyr-137, Arg-138, Gly-184, Val-186, Asp-215, Gly-216, Ala-217, and Asn-244 together coordinate thiamine diphosphate. Asp-215 is a Mg(2+) binding site. Mg(2+)-binding residues include Asn-244 and Tyr-246. Thiamine diphosphate is bound at residue His-311.

In terms of assembly, eukaryotic pyruvate dehydrogenase (PDH) complexes are organized as a core consisting of the oligomeric dihydrolipoamide acetyl-transferase (E2), around which are arranged multiple copies of pyruvate dehydrogenase (E1), dihydrolipoamide dehydrogenase (E3) and protein X (E3BP) bound by non-covalent bonds. The Chaetomium thermophilum PDH complex contains 60 E2 units, 12 E3BP units, about 20 E1 units, and 12 or more E3 units. The units are organized in 1 E2 60-mer, 4 E3BP trimers, about 20 E1 tetramers, and a maximum of 12 E3 dimers. Pyruvate dehydrogenase (E1) is active as a tetramer of 2 alpha and 2 beta subunits. The E3BP trimers are bound inside the icosahedral core with tetrahedral symmetry. It depends on thiamine diphosphate as a cofactor. Requires Mg(2+) as cofactor.

Its subcellular location is the mitochondrion. It catalyses the reaction N(6)-[(R)-lipoyl]-L-lysyl-[protein] + pyruvate + H(+) = N(6)-[(R)-S(8)-acetyldihydrolipoyl]-L-lysyl-[protein] + CO2. Its function is as follows. The 10-megadalton pyruvate dehydrogenase complex contains multiple copies of three enzymatic components: pyruvate dehydrogenase (E1), dihydrolipoamide acetyltransferase (E2) and lipoamide dehydrogenase (E3) and catalyzes the overall oxidative decarboxylation of pyruvate to form acetyl-CoA and CO(2). Within the complex, pyruvate and thiamine pyrophosphate (TPP or vitamin B1) are bound by pyruvate dehydrogenase E1 subunits alpha and beta and pyruvate is decarboxylated leading to the 2-carbon hydrohyethyl bound to TPP. The E2 component contains covalently-bound lipoyl cofactors and transfers the hydroxyethyl group from TPP to an oxidized form of covalently bound lipoamide, and the resulting acetyl group is then transferred to free coenzyme A to form acetyl-CoA and reduced dihydrolipoamide-E2. Finally, the flavoprotein dihydrolipoamide dehydrogenase (E3) re-oxidizes the lipoyl group of dihydrolipoamide-E2 to form lipoamide-E2 and NADH. A fourth subunit, E3BP, is responsible for tethering E3 in proximity to the core, forming the entire metabolon. In Chaetomium thermophilum (strain DSM 1495 / CBS 144.50 / IMI 039719) (Thermochaetoides thermophila), this protein is Pyruvate dehydrogenase E1 component subunit alpha, mitochondrial.